The sequence spans 150 residues: D-aminoacyl-tRNA deacylase (150 aa).

The Gly-cisPro motif, important for rejection of L-amino acids motif lies at 138–139; sequence GP.

This sequence belongs to the DTD family. Homodimer.

The protein resides in the cytoplasm. The catalysed reaction is glycyl-tRNA(Ala) + H2O = tRNA(Ala) + glycine + H(+). The enzyme catalyses a D-aminoacyl-tRNA + H2O = a tRNA + a D-alpha-amino acid + H(+). Functionally, an aminoacyl-tRNA editing enzyme that deacylates mischarged D-aminoacyl-tRNAs. Also deacylates mischarged glycyl-tRNA(Ala), protecting cells against glycine mischarging by AlaRS. Acts via tRNA-based rather than protein-based catalysis; rejects L-amino acids rather than detecting D-amino acids in the active site. By recycling D-aminoacyl-tRNA to D-amino acids and free tRNA molecules, this enzyme counteracts the toxicity associated with the formation of D-aminoacyl-tRNA entities in vivo and helps enforce protein L-homochirality. The sequence is that of D-aminoacyl-tRNA deacylase from Opitutus terrae (strain DSM 11246 / JCM 15787 / PB90-1).